The sequence spans 167 residues: Leptin (167 aa).

The signal sequence occupies residues 1–21 (MRCGPLYQFLWLWPYLSYVEA). The cysteines at positions 117 and 167 are disulfide-linked.

The protein belongs to the leptin family.

It localises to the secreted. Key player in the regulation of energy balance and body weight control. Once released into the circulation, has central and peripheral effects by binding LEPR, found in many tissues, which results in the activation of several major signaling pathways. In the hypothalamus, acts as an appetite-regulating factor that induces a decrease in food intake and an increase in energy consumption by inducing anorexinogenic factors and suppressing orexigenic neuropeptides, also regulates bone mass and secretion of hypothalamo-pituitary-adrenal hormones. In the periphery, increases basal metabolism, influences reproductive function, regulates pancreatic beta-cell function and insulin secretion, is pro-angiogenic for endothelial cell and affects innate and adaptive immunity. In the arcuate nucleus of the hypothalamus, activates by depolarization POMC neurons inducing FOS and SOCS3 expression to release anorexigenic peptides and inhibits by hyperpolarization NPY neurons inducing SOCS3 with a consequent reduction on release of orexigenic peptides. In addition to its known satiety inducing effect, has a modulatory role in nutrient absorption. In the intestine, reduces glucose absorption by enterocytes by activating PKC and leading to a sequential activation of p38, PI3K and ERK signaling pathways which exerts an inhibitory effect on glucose absorption. Acts as a growth factor on certain tissues, through the activation of different signaling pathways increases expression of genes involved in cell cycle regulation such as CCND1, via JAK2-STAT3 pathway, or VEGFA, via MAPK1/3 and PI3K-AKT1 pathways. May also play an apoptotic role via JAK2-STAT3 pathway and up-regulation of BIRC5 expression. Pro-angiogenic, has mitogenic activity on vascular endothelial cells and plays a role in matrix remodeling by regulating the expression of matrix metalloproteinases (MMPs) and tissue inhibitors of metalloproteinases (TIMPs). In innate immunity, modulates the activity and function of neutrophils by increasing chemotaxis and the secretion of oxygen radicals. Increases phagocytosis by macrophages and enhances secretion of pro-inflammatory mediators. Increases cytotoxic ability of NK cells. Plays a pro-inflammatory role, in synergy with IL1B, by inducing NOS2 which promotes the production of IL6, IL8 and Prostaglandin E2, through a signaling pathway that involves JAK2, PI3K, MAP2K1/MEK1 and MAPK14/p38. In adaptive immunity, promotes the switch of memory T-cells towards T helper-1 cell immune responses. Increases CD4(+)CD25(-) T-cell proliferation and reduces autophagy during TCR (T-cell receptor) stimulation, through MTOR signaling pathway activation and BCL2 up-regulation. The sequence is that of Leptin (LEP) from Bubalus bubalis (Domestic water buffalo).